The sequence spans 248 residues: UPF0736 protein BcerKBAB4_1085 (248 aa).

It belongs to the UPF0736 family.

The polypeptide is UPF0736 protein BcerKBAB4_1085 (Bacillus mycoides (strain KBAB4) (Bacillus weihenstephanensis)).